Reading from the N-terminus, the 505-residue chain is Katanin p60 ATPase-containing subunit A-like 2 (505 aa).

Residues 25 to 57 form the LisH domain; sequence RRKNLLILIMHYLLQEGYVDSANSLEQETKISS. 2 disordered regions span residues 94 to 127 and 140 to 167; these read LDHDSRVQPKPRSAGKLRRAGSNSTQGLPRIGQQ and RTNGHQKALSRENSKQESGGNSPQEASE. Polar residues-rich tracts occupy residues 114-127 and 155-164; these read GSNSTQGLPRIGQQ and QESGGNSPQE. Position 298 to 305 (298 to 305) interacts with ATP; sequence GPPGTGKT.

This sequence belongs to the AAA ATPase family. Katanin p60 subunit A1 subfamily. A-like 2 sub-subfamily.

The protein localises to the cytoplasm. It is found in the cytoskeleton. The protein resides in the spindle. It localises to the spindle pole. The catalysed reaction is n ATP + n H2O + a microtubule = n ADP + n phosphate + (n+1) alpha/beta tubulin heterodimers.. Its function is as follows. Severs microtubules in vitro in an ATP-dependent manner. This activity may promote rapid reorganization of cellular microtubule arrays. The sequence is that of Katanin p60 ATPase-containing subunit A-like 2 (katnal2) from Xenopus laevis (African clawed frog).